The chain runs to 907 residues: MPTTKCAVPLVSGAAGGGGSAELTRQLSSTQASPRFSFSSGVLPSLGSRGGGERHARLRRFIVSPYDRRYELWNNYLILLVVYSAWVTPFEFGFVPEPAGALAAADNAVNAFFAVDIVLTFFVAYTDPKTFLLQDDPRKIALRYITTWFVLDVVATIPTELARRILPPDLRSYGFFGILRLWRLHRVGILFARLEKDRKFSYFWVRCVKLVCVTLFAVHCSACFYYLLADRYPDPTNTWISAYMPNFHKASIWSRYVASMYWSITTLSTVGYGDMHAENTGEMVFTTTYMLFNLGLTAYIIGNMTNLVVHGTSRTRKFRDMIQAATSFAQRHQLPARLQEQMVSHLSLKFRTNSEGLHQQETFEALPKAIKSSISHHLFFGLVQNVYLFEGVSNDLIFQLVSEMNAEYFAPREDIILQNEAPADFYIIVSGSMELIELHNGIEQASVLTLAGMAKSGDVVGEIGVLCYRPQLFTARTRSLCQLLRLDRAAFLRIIQSNIADGTIVMNNLIQYLREKKEIASIVAVAKEIDDMLARGQMDFPITLCFAASKGDSFLLHQLLKRGLDPNESDHYGRTALHIAASNGNEQCVRLLLENGADSNSRDPEGRVPLWEALCRRHQTVVQLLVDAGADLSGGDAAPYARVAVEQNDAALLGEIVRHGGDVSGACSGDGTTALHRAVLDGNVQMARLLLEHGADADAEDVNGLTPRAVAEQGGHADMQLAFASATRHEPRKARPPPPASAIVPVPLRDGVDSSPSSSSRRGRTSSTSAASARSTPQRMANFRNSLFGVISSSHAFHHEGGYRGGGGGGGAAAERERSSSSPPLVRVAISCPESRGGKDHSSKLVFMPETLRGLLELGAARFGVSPTRVVTSGGADVDDARLVRDGDHLLLVTDKWVPPENRSRNQ.

Residues 1–75 (MPTTKCAVPL…YDRRYELWNN (75 aa)) lie on the Cytoplasmic side of the membrane. A helical membrane pass occupies residues 76–96 (YLILLVVYSAWVTPFEFGFVP). Topologically, residues 97–102 (EPAGAL) are extracellular. Residues 103 to 123 (AAADNAVNAFFAVDIVLTFFV) traverse the membrane as a helical segment. The Cytoplasmic portion of the chain corresponds to 124-146 (AYTDPKTFLLQDDPRKIALRYIT). A helical transmembrane segment spans residues 147–167 (TWFVLDVVATIPTELARRILP). Over 168–174 (PDLRSYG) the chain is Extracellular. A helical; Voltage-sensor transmembrane segment spans residues 175-195 (FFGILRLWRLHRVGILFARLE). Residues 196-209 (KDRKFSYFWVRCVK) are Cytoplasmic-facing. The helical transmembrane segment at 210 to 230 (LVCVTLFAVHCSACFYYLLAD) threads the bilayer. Topologically, residues 231-257 (RYPDPTNTWISAYMPNFHKASIWSRYV) are extracellular. Residues 258-277 (ASMYWSITTLSTVGYGDMHA) constitute an intramembrane region (pore-forming). Over 278 to 288 (ENTGEMVFTTT) the chain is Extracellular. Residues 289–309 (YMLFNLGLTAYIIGNMTNLVV) form a helical membrane-spanning segment. The Cytoplasmic segment spans residues 310–907 (HGTSRTRKFR…VPPENRSRNQ (598 aa)). 388–512 (LFEGVSNDLI…TIVMNNLIQY (125 aa)) serves as a coordination point for a nucleoside 3',5'-cyclic phosphate. ANK repeat units lie at residues 539 to 568 (DFPI…DPNE), 572 to 601 (YGRT…DSNS), 605 to 634 (EGRV…DLSG), 636 to 665 (DAAP…DVSG), and 670 to 699 (DGTT…DADA). Disordered regions lie at residues 726–779 (ATRH…TPQR) and 801–824 (GGYR…SSPP). The span at 754-776 (SSPSSSSRRGRTSSTSAASARST) shows a compositional bias: low complexity. Residues 803-812 (YRGGGGGGGA) show a composition bias toward gly residues. The 81-residue stretch at 827–907 (RVAISCPESR…VPPENRSRNQ (81 aa)) folds into the KHA domain.

The protein belongs to the potassium channel family. Plant (TC 1.A.1.4) subfamily.

It is found in the membrane. Functionally, probable inward-rectifying potassium channel. Assuming opened or closed conformations in response to the voltage difference across the membrane, the channel is activated by hyperpolarization. This is Potassium channel AKT3 from Oryza sativa subsp. japonica (Rice).